The chain runs to 84 residues: uncharacterized protein (84 aa).

Residues 10-32 traverse the membrane as a helical segment; that stretch reads AFSLAYYIIIHLLCLSYIYEIIH.

It is found in the membrane. This is an uncharacterized protein from Saccharomyces cerevisiae (strain ATCC 204508 / S288c) (Baker's yeast).